We begin with the raw amino-acid sequence, 306 residues long: D-alanine--D-alanine ligase (306 aa).

Residues 102 to 300 (KHVAKAAGIP…FGEFLRWMVE (199 aa)) form the ATP-grasp domain. Residue 128-183 (PMKPPYVVKPVREGSSFGVVIVKEDQSHPPQVITSSEWRYGDRVMVERYIAGRELT) coordinates ATP. 3 residues coordinate Mg(2+): Asp252, Glu267, and Asn269.

This sequence belongs to the D-alanine--D-alanine ligase family. Mg(2+) serves as cofactor. Requires Mn(2+) as cofactor.

Its subcellular location is the cytoplasm. It catalyses the reaction 2 D-alanine + ATP = D-alanyl-D-alanine + ADP + phosphate + H(+). It participates in cell wall biogenesis; peptidoglycan biosynthesis. In terms of biological role, cell wall formation. This chain is D-alanine--D-alanine ligase, found in Sinorhizobium fredii (strain NBRC 101917 / NGR234).